We begin with the raw amino-acid sequence, 273 residues long: Undecaprenyl-diphosphatase (273 aa).

7 helical membrane passes run 48–68 (AANTFKVVIQLGSILAAVVVF), 89–109 (LTLLHVIIGLLPAGVLGVLFE), 116–136 (LFSTKTVLIGLVLGALLMIVA), 152–172 (ITYKQAFLVGLVQCLSLWPGF), 193–213 (ADFTFIMAVPIMAGASGLSLL), 222–242 (ADIPFFIAGFLSAFVFALLAI), and 252–272 (IRLVPFAVYRIALAFIIYFLY).

Belongs to the UppP family.

The protein localises to the cell membrane. It catalyses the reaction di-trans,octa-cis-undecaprenyl diphosphate + H2O = di-trans,octa-cis-undecaprenyl phosphate + phosphate + H(+). Functionally, catalyzes the dephosphorylation of undecaprenyl diphosphate (UPP). Confers resistance to bacitracin. The protein is Undecaprenyl-diphosphatase of Geobacillus thermodenitrificans (strain NG80-2).